A 58-amino-acid chain; its full sequence is Sec-independent protein translocase protein TatA (58 aa).

Residues 1-21 (MLSNIGFPGLILILVAILILF) form a helical membrane-spanning segment.

This sequence belongs to the TatA/E family. Forms a complex with TatC.

The protein localises to the cell membrane. In terms of biological role, part of the twin-arginine translocation (Tat) system that transports large folded proteins containing a characteristic twin-arginine motif in their signal peptide across membranes. TatA could form the protein-conducting channel of the Tat system. This chain is Sec-independent protein translocase protein TatA, found in Bacillus cytotoxicus (strain DSM 22905 / CIP 110041 / 391-98 / NVH 391-98).